Reading from the N-terminus, the 319-residue chain is Olfactory receptor 8K1 (319 aa).

Residues 1 to 31 (MNHVVKHNHTAVTKVTEFILMGITDNPGLQA) lie on the Extracellular side of the membrane. A glycan (N-linked (GlcNAc...) asparagine) is linked at Asn-8. A helical membrane pass occupies residues 32 to 52 (PLFGLFLIIYLVTVIGNLGMV). The Cytoplasmic portion of the chain corresponds to 53 to 60 (ILTYLDSK). The chain crosses the membrane as a helical span at residues 61-81 (LHTPMYFFLRHLSITDLGYST). Residues 82–105 (VIAPKMLVNFIVHKNTISYNWYAT) are Extracellular-facing. Residues 106–126 (QLAFFEIFIISELFILSAMAY) form a helical membrane-spanning segment. The Cytoplasmic segment spans residues 127–145 (DRYVAICKPLLYVIIMAEK). A helical transmembrane segment spans residues 146–166 (VLWVLVIVPYLYSTFVSLFLT). Residues 167-203 (IKLFKLSFCGSNIISYFYCDCIPLMSILCSDTNELEL) lie on the Extracellular side of the membrane. A helical transmembrane segment spans residues 204-223 (IILIFSGCNLLFSLSIVLIS). The Cytoplasmic segment spans residues 224 to 243 (YMFILVAILRMNSRKGRYKA). The chain crosses the membrane as a helical span at residues 244–264 (FSTCSSHLTVVIMFYGTLLFI). Over 265 to 277 (YLQPKSSHTLAID) the chain is Extracellular. The chain crosses the membrane as a helical span at residues 278–298 (KMASVFYTLLIPMLNPLIYSL). The Cytoplasmic portion of the chain corresponds to 299–319 (RNKEVKDALKRTLTNRFKIPI).

The protein belongs to the G-protein coupled receptor 1 family.

The protein localises to the cell membrane. Functionally, odorant receptor. The sequence is that of Olfactory receptor 8K1 (OR8K1) from Homo sapiens (Human).